The chain runs to 465 residues: Glutamate--tRNA ligase (465 aa).

A 'HIGH' region motif is present at residues 5-15 (PSPTGMFHVGG). Zn(2+) contacts are provided by Cys96, Cys98, Cys118, and Asp120. Positions 228 to 232 (KLSKR) match the 'KMSKS' region motif. Residue Lys231 coordinates ATP.

Belongs to the class-I aminoacyl-tRNA synthetase family. Glutamate--tRNA ligase type 1 subfamily. Monomer. Zn(2+) serves as cofactor.

The protein resides in the cytoplasm. It catalyses the reaction tRNA(Glu) + L-glutamate + ATP = L-glutamyl-tRNA(Glu) + AMP + diphosphate. Functionally, catalyzes the attachment of glutamate to tRNA(Glu) in a two-step reaction: glutamate is first activated by ATP to form Glu-AMP and then transferred to the acceptor end of tRNA(Glu). This is Glutamate--tRNA ligase from Salinispora tropica (strain ATCC BAA-916 / DSM 44818 / JCM 13857 / NBRC 105044 / CNB-440).